Reading from the N-terminus, the 122-residue chain is Large ribosomal subunit protein uL14 (122 aa).

This sequence belongs to the universal ribosomal protein uL14 family. In terms of assembly, part of the 50S ribosomal subunit. Forms a cluster with proteins L3 and L19. In the 70S ribosome, L14 and L19 interact and together make contacts with the 16S rRNA in bridges B5 and B8.

In terms of biological role, binds to 23S rRNA. Forms part of two intersubunit bridges in the 70S ribosome. The protein is Large ribosomal subunit protein uL14 of Xylella fastidiosa (strain M23).